The sequence spans 340 residues: MNNRFLDACWGKPVDRTPVWLMRQAGRYLPEYMAVRSKCTFLELCKTPELAAEVTIQPIDILNVDAAILFSDILTPVEPMGLKLDFVPGPVFEHPVRTMADVEKLRIPNPEEDVPYVLDTIKILRRELAGRVPLIGFGGAPFTLACYMVEGKGSKDWANIKRMMYAAPDVYAALMDKVTMMDMEYLNAQIKAGAQAIQIFDTWGGVLSPTDYEKYVLPYTTKLINGLNRQNTPVIHFVKGAGTMLETVQKAGGDVMGLDWHVNLGKARDVLGQNMAVQGNLDPTVLYAPKEVIEAEVKRVLDENAGRPGHIFNLGHGILPTVPPENAIHMVECVHRLSQK.

Substrate-binding positions include 23–27 (RQAGR), Asp72, Tyr147, Thr202, and His316.

It belongs to the uroporphyrinogen decarboxylase family. Homodimer.

Its subcellular location is the cytoplasm. It catalyses the reaction uroporphyrinogen III + 4 H(+) = coproporphyrinogen III + 4 CO2. Its pathway is porphyrin-containing compound metabolism; protoporphyrin-IX biosynthesis; coproporphyrinogen-III from 5-aminolevulinate: step 4/4. Its function is as follows. Catalyzes the decarboxylation of four acetate groups of uroporphyrinogen-III to yield coproporphyrinogen-III. This is Uroporphyrinogen decarboxylase from Geobacter sulfurreducens (strain ATCC 51573 / DSM 12127 / PCA).